The primary structure comprises 460 residues: Argininosuccinate lyase (460 aa).

It belongs to the lyase 1 family. Argininosuccinate lyase subfamily.

The protein resides in the cytoplasm. The catalysed reaction is 2-(N(omega)-L-arginino)succinate = fumarate + L-arginine. The protein operates within amino-acid biosynthesis; L-arginine biosynthesis; L-arginine from L-ornithine and carbamoyl phosphate: step 3/3. This chain is Argininosuccinate lyase, found in Prosthecochloris aestuarii (strain DSM 271 / SK 413).